We begin with the raw amino-acid sequence, 612 residues long: 2-isopropylmalate synthase B (612 aa).

The region spanning 71–344 (VRIFDTTLRD…YTGINTQHIL (274 aa)) is the Pyruvate carboxyltransferase domain. The a divalent metal cation site is built by Asp-80, His-277, and Asn-313.

It belongs to the alpha-IPM synthase/homocitrate synthase family. LeuA type 1 subfamily. As to quaternary structure, homodimer. A divalent metal cation is required as a cofactor.

It catalyses the reaction 3-methyl-2-oxobutanoate + acetyl-CoA + H2O = (2S)-2-isopropylmalate + CoA + H(+). The protein operates within amino-acid biosynthesis; L-leucine biosynthesis; L-leucine from 3-methyl-2-oxobutanoate: step 1/4. Catalyzes the condensation of the acetyl group of acetyl-CoA with 3-methyl-2-oxobutanoate (2-oxoisovalerate) to form 3-carboxy-3-hydroxy-4-methylpentanoate (2-isopropylmalate). The polypeptide is 2-isopropylmalate synthase B (IPMSB) (Solanum pennellii (Tomato)).